Consider the following 233-residue polypeptide: Thymidylate kinase (233 aa).

Residue 10–17 (GVDGVGKT) participates in ATP binding.

It belongs to the thymidylate kinase family.

It catalyses the reaction dTMP + ATP = dTDP + ADP. In terms of biological role, phosphorylation of dTMP to form dTDP in both de novo and salvage pathways of dTTP synthesis. The sequence is that of Thymidylate kinase from Bifidobacterium longum subsp. infantis (strain ATCC 15697 / DSM 20088 / JCM 1222 / NCTC 11817 / S12).